A 193-amino-acid polypeptide reads, in one-letter code: Ion-translocating oxidoreductase complex subunit A (193 aa).

6 helical membrane passes run 5-25 (ALLL…FLGL), 39-59 (LGMG…SWML), 62-82 (WLLA…LVIA), 102-122 (SLGI…VALL), 134-154 (VLFG…FAGL), and 172-192 (AAFI…GLVA).

It belongs to the NqrDE/RnfAE family. The complex is composed of six subunits: RnfA, RnfB, RnfC, RnfD, RnfE and RnfG.

Its subcellular location is the cell inner membrane. Part of a membrane-bound complex that couples electron transfer with translocation of ions across the membrane. In Aromatoleum aromaticum (strain DSM 19018 / LMG 30748 / EbN1) (Azoarcus sp. (strain EbN1)), this protein is Ion-translocating oxidoreductase complex subunit A.